Consider the following 742-residue polypeptide: NAD(P)H-quinone oxidoreductase subunit 5, chloroplastic (742 aa).

A run of 16 helical transmembrane segments spans residues 9–29 (WIIP…LLLF), 40–60 (WSFQ…NLSI), 89–109 (IDPL…MVLI), 125–145 (FAYM…SNLI), 147–167 (IYIF…FWFT), 185–205 (GDFG…SFEF), 219–239 (NEVN…GAIA), 258–278 (TPIS…FLVA), 283–303 (LFIV…ITVF), 327–347 (LGYM…FHLI), 354–374 (ALLF…VGYC), 396–416 (NSFL…CFWS), 425–445 (WLYS…TAFY), 550–570 (LFPI…GIPF), 606–626 (FFSV…YKPV), and 722–742 (YLFF…FFNV).

Belongs to the complex I subunit 5 family. In terms of assembly, NDH is composed of at least 16 different subunits, 5 of which are encoded in the nucleus.

Its subcellular location is the plastid. It is found in the chloroplast thylakoid membrane. It catalyses the reaction a plastoquinone + NADH + (n+1) H(+)(in) = a plastoquinol + NAD(+) + n H(+)(out). It carries out the reaction a plastoquinone + NADPH + (n+1) H(+)(in) = a plastoquinol + NADP(+) + n H(+)(out). NDH shuttles electrons from NAD(P)H:plastoquinone, via FMN and iron-sulfur (Fe-S) centers, to quinones in the photosynthetic chain and possibly in a chloroplast respiratory chain. The immediate electron acceptor for the enzyme in this species is believed to be plastoquinone. Couples the redox reaction to proton translocation, and thus conserves the redox energy in a proton gradient. In Lactuca sativa (Garden lettuce), this protein is NAD(P)H-quinone oxidoreductase subunit 5, chloroplastic (ndhF).